A 117-amino-acid polypeptide reads, in one-letter code: Large ribosomal subunit protein uL18 (117 aa).

It belongs to the universal ribosomal protein uL18 family. In terms of assembly, part of the 50S ribosomal subunit; part of the 5S rRNA/L5/L18/L25 subcomplex. Contacts the 5S and 23S rRNAs.

Functionally, this is one of the proteins that bind and probably mediate the attachment of the 5S RNA into the large ribosomal subunit, where it forms part of the central protuberance. In Proteus mirabilis (strain HI4320), this protein is Large ribosomal subunit protein uL18.